An 86-amino-acid polypeptide reads, in one-letter code: Late effector protein 1 (86 aa).

The N-terminal stretch at Met1 to Ser24 is a signal peptide.

The protein belongs to the lep1 family. As to quaternary structure, interacts at the cell wall with secreted rep1 repellent peptides.

It is found in the secreted. It localises to the cell wall. Functionally, core effector contributing to spore formation and tumor formation at the host plant. Modulates surface hydrophobicity promoting cell-cell or cell-surface contacts. Lep1 and rep1 interact in aerial hyphae to form a strong hydrophobic layer. Plays a crucial role in hyphal aggregation that might be a prerequisite for strong proliferation of diploid cells and for induction of the morphological changes associated with spore formation. This is Late effector protein 1 from Mycosarcoma maydis (Corn smut fungus).